The primary structure comprises 527 residues: Peptide chain release factor 3 (527 aa).

Positions 9–277 (AKRRTFAIIS…AVVDWAPRPL (269 aa)) constitute a tr-type G domain. GTP contacts are provided by residues 18–25 (SHPDAGKT), 86–90 (DTPGH), and 140–143 (NKLD).

This sequence belongs to the TRAFAC class translation factor GTPase superfamily. Classic translation factor GTPase family. PrfC subfamily.

It localises to the cytoplasm. Increases the formation of ribosomal termination complexes and stimulates activities of RF-1 and RF-2. It binds guanine nucleotides and has strong preference for UGA stop codons. It may interact directly with the ribosome. The stimulation of RF-1 and RF-2 is significantly reduced by GTP and GDP, but not by GMP. The chain is Peptide chain release factor 3 from Pseudomonas putida (strain ATCC 47054 / DSM 6125 / CFBP 8728 / NCIMB 11950 / KT2440).